A 732-amino-acid chain; its full sequence is 1,4-alpha-glucan branching enzyme GlgB 2 (732 aa).

Catalysis depends on Asp413, which acts as the Nucleophile. Catalysis depends on Glu466, which acts as the Proton donor.

Belongs to the glycosyl hydrolase 13 family. GlgB subfamily. In terms of assembly, monomer.

The enzyme catalyses Transfers a segment of a (1-&gt;4)-alpha-D-glucan chain to a primary hydroxy group in a similar glucan chain.. The protein operates within glycan biosynthesis; glycogen biosynthesis. Its function is as follows. Catalyzes the formation of the alpha-1,6-glucosidic linkages in glycogen by scission of a 1,4-alpha-linked oligosaccharide from growing alpha-1,4-glucan chains and the subsequent attachment of the oligosaccharide to the alpha-1,6 position. This chain is 1,4-alpha-glucan branching enzyme GlgB 2, found in Rhizobium etli (strain ATCC 51251 / DSM 11541 / JCM 21823 / NBRC 15573 / CFN 42).